The chain runs to 1820 residues: Afadin (1820 aa).

One can recognise a Ras-associating 1 domain in the interval 39-133; it reads FHGVMRFYFQ…GRFVLKNEND (95 aa). Residues 129-196 are disordered; the sequence is KNENDAIPAK…PSQGDDSENS (68 aa). Residues 146–186 are a coiled coil; sequence EKQEKEGVIQNFKRTLSKKEKKEKKKKEKEALRQASDKEER. A compositionally biased stretch (basic residues) spans 160–172; that stretch reads TLSKKEKKEKKKK. Basic and acidic residues predominate over residues 173–189; the sequence is EKEALRQASDKEERPSQ. 3 positions are modified to phosphoserine: Ser216, Ser246, and Ser256. In terms of domain architecture, Ras-associating 2 spans 246-348; the sequence is SGGTLRIYAD…LVFQLKRRPP (103 aa). The span at 356-371 shows a compositional bias: basic and acidic residues; the sequence is KKHVEGKSLKGKDRAD. The interval 356–377 is disordered; sequence KKHVEGKSLKGKDRADGSGYGS. Phosphoserine is present on residues Ser391 and Ser424. The FHA domain occupies 426–492; the sequence is TEVGTEKFDD…LQSGMRLQFG (67 aa). 13 positions are modified to phosphoserine: Ser512, Ser557, Ser562, Ser655, Ser1083, Ser1107, Ser1126, Ser1140, Ser1143, Ser1172, Ser1173, Ser1182, and Ser1199. Positions 538 to 569 are disordered; that stretch reads GDVHSGTALPASRSTTRLDSDRVSSASSTAER. The Dilute domain maps to 653 to 908; it reads DISPTERTHK…IENVVAVAEN (256 aa). A PDZ domain is found at 1007-1093; sequence IITVTLKKQN…VVTLEVAKQG (87 aa). The disordered stretch occupies residues 1107 to 1194; that stretch reads SPMMQRISDR…GKGPYTSGTA (88 aa). Basic and acidic residues predominate over residues 1113-1128; that stretch reads ISDRRGSGKPRPKSEG. Residues 1132 to 1143 are compositionally biased toward polar residues; it reads YNNSAQNGSPES. A compositionally biased stretch (basic and acidic residues) spans 1152–1172; the sequence is SEPKKLPGDDRLMKNRADHRS. The interval 1203-1222 is disordered; it reads GNLCTEEQSPPPRPEAYPIP. Residue Thr1232 is modified to Phosphothreonine. 3 disordered regions span residues 1235 to 1278, 1308 to 1527, and 1567 to 1716; these read ASKS…SQEE, QSSS…KQQQ, and RLQE…LKTQ. Position 1238 is a phosphoserine (Ser1238). Over residues 1252-1262 the composition is skewed to basic and acidic residues; sequence YEEKPHVHTES. Residue Ser1275 is modified to Phosphoserine. The span at 1309-1318 shows a compositional bias: low complexity; that stretch reads SSSVESSTSS. The span at 1325-1337 shows a compositional bias: polar residues; sequence SSKSVTPASTLTK. Ser1328 carries the post-translational modification Phosphoserine. Thr1330 carries the phosphothreonine modification. The segment covering 1364–1373 has biased composition (pro residues); it reads LPPPPPPPPV. Over residues 1407–1440 the composition is skewed to basic and acidic residues; sequence EWKKREEHQRWYEKEKARLEEERERKRREQERKL. Residues 1410–1446 are a coiled coil; that stretch reads KREEHQRWYEKEKARLEEERERKRREQERKLGQMRSQ. The span at 1443 to 1457 shows a compositional bias: polar residues; it reads MRSQTLNPASFSPLA. A compositionally biased stretch (basic and acidic residues) spans 1487-1503; that stretch reads TIERKDLQYITISKEEL. Phosphoserine is present on residues Ser1499 and Ser1510. Over residues 1513–1526 the composition is skewed to basic and acidic residues; the sequence is PWKRDAREKLEKQQ. Positions 1523-1561 form a coiled coil; the sequence is EKQQQMHIVDMLSKEIHELQNKVDRTAEESDRLRKLMLE. Residues 1576–1587 are compositionally biased toward acidic residues; that stretch reads EDDDEEEDDDVD. Positions 1593 to 1665 form a coiled coil; that stretch reads QRLEAERRAR…SRLEAERRRQ (73 aa). The segment covering 1595-1675 has biased composition (basic and acidic residues); that stretch reads LEAERRARMQ…HEEAARRLLE (81 aa). 4 positions are modified to phosphoserine: Ser1694, Ser1719, Ser1770, and Ser1795. Residues 1734–1820 form a disordered region; the sequence is EEEDYGPAGP…TELENELNTK (87 aa). The segment covering 1759 to 1772 has biased composition (basic and acidic residues); it reads APREAREKLTRSQD. Basic and acidic residues predominate over residues 1800–1820; that stretch reads VSDKVKASRKLTELENELNTK. Lys1803 carries the post-translational modification N6-acetyllysine.

As to quaternary structure, homodimer. Interacts with F-actin, nectin and NECTIN3. Essential for the association of nectin and E-cadherin. Isoform 2/s-afadin does not interact with F-actin. Interacts with ZO-1 and occludin, but probably in an indirect manner. Interacts with RIT1, RIT2, NRXN1 and BCR. Interacts with ADAM10; the interaction locks ADAM10 at adherens junctions following ADAM10 recruitment to adherens junctions by TSPAN33. In terms of tissue distribution, isoform 1 is expressed only in a restricted set of epithelial structures during early embryogenesis.

It localises to the cell junction. Its subcellular location is the adherens junction. Belongs to an adhesion system, probably together with the E-cadherin-catenin system, which plays a role in the organization of homotypic, interneuronal and heterotypic cell-cell adherens junctions (AJs). Nectin- and actin-filament-binding protein that connects nectin to the actin cytoskeleton. May play a key role in the organization of epithelial structures of the embryonic ectoderm. Essential for the organization of adherens junctions. The sequence is that of Afadin from Mus musculus (Mouse).